The sequence spans 254 residues: Syntaxin-6 (254 aa).

At 1–233 (MSMEDPFFVV…VSHMTSDRRQ (233 aa)) the chain is on the cytoplasmic side. Residues 46-72 (TTNELRNNLRSIEWDLEDLDETISIVE) are a coiled coil. Residues 103–138 (KDQMSNSSMQALAERKNRQALLGESSSQSWSSGPDK) are disordered. Residues 162 to 224 (QLIVEQQDEQ…DNVMKKLAKV (63 aa)) form the t-SNARE coiled-coil homology domain. The helical; Anchor for type IV membrane protein transmembrane segment at 234-254 (WCAIIVLFVILLVVLVLFLVL) threads the bilayer.

This sequence belongs to the syntaxin family.

Its subcellular location is the golgi apparatus membrane. It localises to the golgi apparatus. It is found in the trans-Golgi network membrane. The protein resides in the recycling endosome membrane. Its function is as follows. SNARE promoting movement of transport vesicles to target membranes. Targets endosomes to the trans-Golgi network, and may therefore function in retrograde trafficking. Together with SNARE STX12, promotes movement of vesicles from endosomes to the cell membrane, and may therefore function in the endocytic recycling pathway. The chain is Syntaxin-6 (STX6) from Gallus gallus (Chicken).